The chain runs to 397 residues: CCA-adding enzyme (397 aa).

Positions 32 and 35 each coordinate ATP. Positions 32 and 35 each coordinate CTP. Residues Asp-45 and Asp-47 each coordinate Mg(2+). The ATP site is built by Arg-116, Asp-159, Arg-162, Arg-165, and Arg-168. CTP-binding residues include Arg-116, Asp-159, Arg-162, Arg-165, and Arg-168.

This sequence belongs to the tRNA nucleotidyltransferase/poly(A) polymerase family. Bacterial CCA-adding enzyme type 3 subfamily. As to quaternary structure, homodimer. It depends on Mg(2+) as a cofactor.

The catalysed reaction is a tRNA precursor + 2 CTP + ATP = a tRNA with a 3' CCA end + 3 diphosphate. It catalyses the reaction a tRNA with a 3' CCA end + 2 CTP + ATP = a tRNA with a 3' CCACCA end + 3 diphosphate. Its function is as follows. Catalyzes the addition and repair of the essential 3'-terminal CCA sequence in tRNAs without using a nucleic acid template. Adds these three nucleotides in the order of C, C, and A to the tRNA nucleotide-73, using CTP and ATP as substrates and producing inorganic pyrophosphate. tRNA 3'-terminal CCA addition is required both for tRNA processing and repair. Also involved in tRNA surveillance by mediating tandem CCA addition to generate a CCACCA at the 3' terminus of unstable tRNAs. While stable tRNAs receive only 3'-terminal CCA, unstable tRNAs are marked with CCACCA and rapidly degraded. The protein is CCA-adding enzyme of Latilactobacillus sakei subsp. sakei (strain 23K) (Lactobacillus sakei subsp. sakei).